Consider the following 361-residue polypeptide: Queuine tRNA-ribosyltransferase (361 aa).

Asp92 acts as the Proton acceptor in catalysis. Residues 92-96, Asp146, Gln189, and Gly216 each bind substrate; that span reads DSGGF. Residues 247-253 are RNA binding; sequence GVGKPAD. Asp266 functions as the Nucleophile in the catalytic mechanism. Positions 271-275 are RNA binding; important for wobble base 34 recognition; sequence TRSGR. Cys304, Cys306, Cys309, and His335 together coordinate Zn(2+).

This sequence belongs to the queuine tRNA-ribosyltransferase family. In terms of assembly, homodimer. Within each dimer, one monomer is responsible for RNA recognition and catalysis, while the other monomer binds to the replacement base PreQ1. Zn(2+) serves as cofactor.

It catalyses the reaction 7-aminomethyl-7-carbaguanine + guanosine(34) in tRNA = 7-aminomethyl-7-carbaguanosine(34) in tRNA + guanine. The protein operates within tRNA modification; tRNA-queuosine biosynthesis. Functionally, catalyzes the base-exchange of a guanine (G) residue with the queuine precursor 7-aminomethyl-7-deazaguanine (PreQ1) at position 34 (anticodon wobble position) in tRNAs with GU(N) anticodons (tRNA-Asp, -Asn, -His and -Tyr). Catalysis occurs through a double-displacement mechanism. The nucleophile active site attacks the C1' of nucleotide 34 to detach the guanine base from the RNA, forming a covalent enzyme-RNA intermediate. The proton acceptor active site deprotonates the incoming PreQ1, allowing a nucleophilic attack on the C1' of the ribose to form the product. After dissociation, two additional enzymatic reactions on the tRNA convert PreQ1 to queuine (Q), resulting in the hypermodified nucleoside queuosine (7-(((4,5-cis-dihydroxy-2-cyclopenten-1-yl)amino)methyl)-7-deazaguanosine). The sequence is that of Queuine tRNA-ribosyltransferase from Rickettsia rickettsii (strain Iowa).